The primary structure comprises 579 residues: MSTASAASSSSSSSASEMIEAPSQVLNFEEIDYKEIEVEEVVGRGAFGVVCKAKWRAKDVAIKQIESESERKAFIVELRQLSRVNHPNIVKLYGACLNPVCLVMEYAEGGSLYNVLHGAEPLPYYTAAHAMSWCLQCSQGVAYLHSMQPKALIHRDLKPPNLLLVAGGTVLKICDFGTACDIQTHMTNNKGSAAWMAPEVFEGSNYSEKCDVFSWGIILWEVITRRKPFDEIGGPAFRIMWAVHNGTRPPLIKNLPKPIESLMTRCWSKDPSQRPSMEEIVKIMTHLMRYFPGADEPLQYPCQYSDEGQSNSATSTGSFMDIASTNTSNKSDTNMEQVPATNDTIKRLESKLLKNQAKQQSESGRLSLGASRGSSVESLPPTSEGKRMSADMSEIEARIVATAGNGQPRRRSIQDLTVTGTEPGQVSSRSSSPSVRMITTSGPTSEKPARSHPWTPDDSTDTNGSDNSIPMAYLTLDHQLQPLAPCPNSKESMAVFEQHCKMAQEYMKVQTEIALLLQRKQELVAELDQDEKDQQNTSRLVQEHKKLLDENKSLSTYYQQCKKQLEVIRSQQQKRQGTS.

The interaction with MAPK8IP1 stretch occupies residues 1–300; sequence MSTASAASSS…FPGADEPLQY (300 aa). Positions 36–291 constitute a Protein kinase domain; it reads IEVEEVVGRG…KIMTHLMRYF (256 aa). ATP is bound by residues 42-50 and Lys63; that span reads VGRGAFGVV. A Glycyl lysine isopeptide (Lys-Gly) (interchain with G-Cter in ubiquitin) cross-link involves residue Lys72. Asp156 (proton acceptor) is an active-site residue. Lys158 is covalently cross-linked (Glycyl lysine isopeptide (Lys-Gly) (interchain with G-Cter in ubiquitin)). Residues Thr184 and Thr187 each carry the phosphothreonine; by autocatalysis modification. Ser192 is subject to Phosphoserine; by autocatalysis. Lys209 participates in a covalent cross-link: Glycyl lysine isopeptide (Lys-Gly) (interchain with G-Cter in ubiquitin). 2 disordered regions span residues 301-338 and 354-391; these read PCQY…MEQV and KNQA…MSAD. Polar residues predominate over residues 306–338; the sequence is DEGQSNSATSTGSFMDIASTNTSNKSDTNMEQV. Positions 361 to 375 are enriched in low complexity; it reads SESGRLSLGASRGSS. Ser367, Ser389, and Ser412 each carry phosphoserine. Polar residues predominate over residues 416–425; the sequence is LTVTGTEPGQ. Residues 416-466 form a disordered region; it reads LTVTGTEPGQVSSRSSSPSVRMITTSGPTSEKPARSHPWTPDDSTDTNGSD. Over residues 426–436 the composition is skewed to low complexity; the sequence is VSSRSSSPSVR. Phosphoserine is present on Ser428.

This sequence belongs to the protein kinase superfamily. STE Ser/Thr protein kinase family. MAP kinase kinase kinase subfamily. Can form homodimer. Binds both upstream activators and downstream substrates in multimolecular complexes. Interacts with TAB1/MAP3K7IP1, TAB2/MAP3K7IP2 and TAB3/MAP3K7IP3. Identified in the TRIKA2 complex composed of MAP3K7/TAK1, TAB1/MAP3K7IP1 and TAB2/MAP3K7IP2. Interacts with PPM1L and PPM1B/PP2CB. Interaction with PP2A and PPP6C leads to its repressed activity. Interacts with TRAF6 and TAB1/MAP3K7IP1; during IL-1 signaling. Interacts with TAOK1 and TAOK2; interaction with TAOK2 interferes with MAP3K7 interaction with IKKA, thus preventing NF-kappa-B activation. Interacts with DYNC2I2 (via WD domains). Interacts with CYLD and RBCK1. Interacts with TGFBR1; induces MAP3K7/TAK1 activation by TRAF6. Interacts with MAPK8IP1 and SMAD6. Interacts with isoform 1 of VRK2. Interacts with DAB2; the interaction is induced by TGF-beta stimulation and may mediate TGF-beta stimulated JNK activation. Interacts with TRIM5. Part of a complex containing ITCH, NDFIP1 and MAP3K7. Interacts with PLEKHM1 (via N- and C-terminus). Interacts with TRIM8. Found in a complex with SH3RF1, RAC2, MAP2K7/MKK7, MAPK8IP1/JIP1, MAPK8/JNK1 and MAPK9/JNK2. Interacts with SASH1. Interacts with RIPK1. Requires Mg(2+) as cofactor. Post-translationally, association with TAB1/MAP3K7IP1 promotes autophosphorylation and subsequent activation. Association with TAB2/MAP3K7IP2, itself associated with free unanchored Lys-63 polyubiquitin chain, promotes autophosphorylation and subsequent activation of MAP3K7. Dephosphorylation at Thr-187 by PP2A and PPP6C leads to inactivation. In terms of processing, 'Lys-48'-linked polyubiquitination at Lys-72 is induced by TNFalpha, and leads to proteasomal degradation. Undergoes 'Lys-48'-linked polyubiquitination catalyzed by ITCH. 'Lys-63'-linked polyubiquitination at Lys-158 by TRIM8 does not lead to proteasomal degradation but contributes to autophosphorylation and activation. Deubiquitinated by CYLD, a protease that selectively cleaves 'Lys-63'-linked ubiquitin chains.Deubiquitinated by USP19; leading to negative regulation of TNF-alpha- and IL-1beta-triggered NF-kappa-B activation.

The protein resides in the cytoplasm. It localises to the cell membrane. It catalyses the reaction L-seryl-[protein] + ATP = O-phospho-L-seryl-[protein] + ADP + H(+). It carries out the reaction L-threonyl-[protein] + ATP = O-phospho-L-threonyl-[protein] + ADP + H(+). Activated by pro-inflammatory cytokines and in response to physical and chemical stresses, including osmotic stress, oxidative stress, arsenic and ultraviolet light irradiation. Activated by 'Lys-63'-linked polyubiquitination and by autophosphorylation. Association with TAB1/MAP3K7IP1 and TAB2/MAP3K7IP2 promotes activation through autophosphorylation, whereas PPM1B/PP2CB, PP2A and PPP6C dephosphorylation leads to inactivation. Ceramides are also able to activate MAP3K7/TAK1. Functionally, serine/threonine kinase which acts as an essential component of the MAP kinase signal transduction pathway. Plays an important role in the cascades of cellular responses evoked by changes in the environment. Mediates signal transduction of TRAF6, various cytokines including interleukin-1 (IL-1), transforming growth factor-beta (TGFB), TGFB-related factors like BMP2 and BMP4, toll-like receptors (TLR), tumor necrosis factor receptor CD40 and B-cell receptor (BCR). Once activated, acts as an upstream activator of the MKK/JNK signal transduction cascade and the p38 MAPK signal transduction cascade through the phosphorylation and activation of several MAP kinase kinases like MAP2K1/MEK1, MAP2K3/MKK3, MAP2K6/MKK6 and MAP2K7/MKK7. These MAP2Ks in turn activate p38 MAPKs and c-jun N-terminal kinases (JNKs); both p38 MAPK and JNK pathways control the transcription factors activator protein-1 (AP-1). Independently of MAP2Ks and p38 MAPKs, acts as a key activator of NF-kappa-B by promoting activation of the I-kappa-B-kinase (IKK) core complex. Mechanistically, recruited to polyubiquitin chains of RIPK2 and IKBKG/NEMO via TAB2/MAP3K7IP2 and TAB3/MAP3K7IP3, and catalyzes phosphorylation and activation of IKBKB/IKKB component of the IKK complex, leading to NF-kappa-B activation. In osmotic stress signaling, plays a major role in the activation of MAPK8/JNK1, but not that of NF-kappa-B. Promotes TRIM5 capsid-specific restriction activity. Phosphorylates RIPK1 at 'Ser-321' which positively regulates RIPK1 interaction with RIPK3 to promote necroptosis but negatively regulates RIPK1 kinase activity and its interaction with FADD to mediate apoptosis. Phosphorylates STING1 in response to cGAMP-activation, promoting association between STEEP1 and STING1 and STING1 translocation to COPII vesicles. This is Mitogen-activated protein kinase kinase kinase 7 (Map3k7) from Mus musculus (Mouse).